Here is a 157-residue protein sequence, read N- to C-terminus: 6,7-dimethyl-8-ribityllumazine synthase (157 aa).

5-amino-6-(D-ribitylamino)uracil-binding positions include F26, 60 to 62 (ALE), and 86 to 88 (AVI). 91–92 (ET) lines the (2S)-2-hydroxy-3-oxobutyl phosphate pocket. H94 acts as the Proton donor in catalysis. N119 contacts 5-amino-6-(D-ribitylamino)uracil. R133 lines the (2S)-2-hydroxy-3-oxobutyl phosphate pocket.

It belongs to the DMRL synthase family.

The enzyme catalyses (2S)-2-hydroxy-3-oxobutyl phosphate + 5-amino-6-(D-ribitylamino)uracil = 6,7-dimethyl-8-(1-D-ribityl)lumazine + phosphate + 2 H2O + H(+). It functions in the pathway cofactor biosynthesis; riboflavin biosynthesis; riboflavin from 2-hydroxy-3-oxobutyl phosphate and 5-amino-6-(D-ribitylamino)uracil: step 1/2. Catalyzes the formation of 6,7-dimethyl-8-ribityllumazine by condensation of 5-amino-6-(D-ribitylamino)uracil with 3,4-dihydroxy-2-butanone 4-phosphate. This is the penultimate step in the biosynthesis of riboflavin. The chain is 6,7-dimethyl-8-ribityllumazine synthase from Laribacter hongkongensis (strain HLHK9).